We begin with the raw amino-acid sequence, 81 residues long: Large ribosomal subunit protein bL31B (81 aa).

The protein belongs to the bacterial ribosomal protein bL31 family. Type B subfamily. As to quaternary structure, part of the 50S ribosomal subunit.

This Lactiplantibacillus plantarum (strain ATCC BAA-793 / NCIMB 8826 / WCFS1) (Lactobacillus plantarum) protein is Large ribosomal subunit protein bL31B (rpmE2).